The sequence spans 540 residues: 2,3-bisphosphoglycerate-independent phosphoglycerate mutase (540 aa).

Residues Asp-24 and Ser-74 each contribute to the Mn(2+) site. Catalysis depends on Ser-74, which acts as the Phosphoserine intermediate. Substrate is bound by residues His-135, Arg-165–Asp-166, Arg-197, Arg-203, Arg-268–Arg-271, and Lys-341. Asp-408, His-412, Asp-449, His-450, and His-467 together coordinate Mn(2+).

It belongs to the BPG-independent phosphoglycerate mutase family. As to quaternary structure, monomer. The cofactor is Mn(2+).

The catalysed reaction is (2R)-2-phosphoglycerate = (2R)-3-phosphoglycerate. It functions in the pathway carbohydrate degradation; glycolysis; pyruvate from D-glyceraldehyde 3-phosphate: step 3/5. Its function is as follows. Catalyzes the interconversion of 2-phosphoglycerate and 3-phosphoglycerate. This Prochlorococcus marinus (strain MIT 9313) protein is 2,3-bisphosphoglycerate-independent phosphoglycerate mutase.